Reading from the N-terminus, the 359-residue chain is N-acetylhexosamine 1-kinase (359 aa).

Positions 21 to 359 (VTGIEPYGDG…IVADIMEAAR (339 aa)) constitute a Protein kinase domain.

It belongs to the protein kinase superfamily. It depends on Mg(2+) as a cofactor.

It catalyses the reaction N-acetyl-D-hexosamine + ATP = N-acetyl-alpha-D-hexosamine 1-phosphate + ADP + H(+). Functionally, phosphorylates both N-acetylglucosamine (GlcNAc) and N-acetylgalactosamine (GalNAc) at similar rates. Involved in the lacto-N-biose I/galacto-N-biose (LNB/GNB) degradation pathway, which is important for host intestinal colonization by bifidobacteria. Also accepts GTP and ITP as phosphate donors. In vitro, can phosphorylate several GlcNAc and GalNAc derivatives. This Bifidobacterium longum subsp. longum (strain ATCC 15707 / DSM 20219 / JCM 1217 / NCTC 11818 / E194b) protein is N-acetylhexosamine 1-kinase (nahK).